The chain runs to 120 residues: uncharacterized protein (120 aa).

An N-terminal signal peptide occupies residues 1–19 (MTSFAVVARLITRAPRVRA). 2 disordered regions span residues 48–71 (VAKK…DKAK) and 90–120 (DTVT…KNLK). The segment covering 90–103 (DTVTGKTEETKESI) has biased composition (basic and acidic residues).

This is an uncharacterized protein from Arabidopsis thaliana (Mouse-ear cress).